The primary structure comprises 1532 residues: IgA-specific serine endopeptidase autotransporter (1532 aa).

Positions 1 to 27 are cleaved as a signal peptide; the sequence is MKAKRFKINAISLSIFLAYALTPYSEA. The region spanning 28–322 is the Peptidase S6 domain; that stretch reads ALVRDDVDYQ…NIYKKEFADK (295 aa). Residue S278 is part of the active site. Disordered regions lie at residues 979-1136 and 1166-1217; these read GRPV…KDNS and LEDE…NTEL. Polar residues predominate over residues 989–1004; that stretch reads AANTASQAQKATQTDG. The span at 1045–1101 shows a compositional bias: basic and acidic residues; that stretch reads EAEKVARQKDEEAKRKAAEIARQQEEARKAAELAAKQKAEAERKARELARQKAEEAS. Residues 1107-1116 show a composition bias toward basic residues; that stretch reads KPKRRRRRAI. A compositionally biased stretch (basic and acidic residues) spans 1207-1217; the sequence is SDKHPQDNTEL. The Autotransporter domain occupies 1280 to 1532; the sequence is ADAEKNSVWM…SGQIKIQIRF (253 aa).

It localises to the periplasm. The protein resides in the secreted. It is found in the cell surface. Its subcellular location is the cell outer membrane. It catalyses the reaction Cleavage of immunoglobulin A molecules at certain Pro-|-Xaa bonds in the hinge region. No small molecule substrates are known.. In terms of biological role, this protease is specific for immunoglobulin A. This is IgA-specific serine endopeptidase autotransporter (iga) from Neisseria gonorrhoeae.